The sequence spans 2457 residues: Highly reducing polyketide synthase ACTTS3 (2457 aa).

Positions 5-435 constitute a Ketosynthase family 3 (KS3) domain; it reads REPIAVIGSA…GTNAHVILES (431 aa). Catalysis depends on for beta-ketoacyl synthase activity residues Cys179, His316, and His356. The tract at residues 545–856 is malonyl-CoA:ACP transacylase (MAT) domain; the sequence is RVLGIFTGQG…VMEAVLESSP (312 aa). Ser641 (for malonyltransferase activity) is an active-site residue. Residues 938–1078 form an N-terminal hotdog fold region; it reads HELLGRRTAD…GRIIIHLGSG (141 aa). The dehydratase (DH) domain stretch occupies residues 938–1244; sequence HELLGRRTAD…LSLKSVAEPT (307 aa). In terms of domain architecture, PKS/mFAS DH spans 938-1246; sequence HELLGRRTAD…LKSVAEPTEE (309 aa). His970 acts as the Proton acceptor; for dehydratase activity in catalysis. Residues 1091-1246 form a C-terminal hotdog fold region; that stretch reads TDLSPVDLDR…LKSVAEPTEE (156 aa). The Proton donor; for dehydratase activity role is filled by Asp1152. The tract at residues 1399-1587 is methyltransferase (CMet) domain; it reads ETMNNCIARA…DVFYDFPDRS (189 aa). Residues 2085–2281 are ketoreductase (KR) domain; that stretch reads FLPDKTYLMI…SDRHIENHLR (197 aa). Positions 2374–2451 constitute a Carrier domain; the sequence is DVTTVFQQAF…EISIDATKKY (78 aa). Ser2411 carries the O-(pantetheine 4'-phosphoryl)serine modification.

Pantetheine 4'-phosphate serves as cofactor.

The protein operates within mycotoxin biosynthesis. Highly reducing polyketide synthase; part of the gene clusters that mediate the biosynthesis of the host-selective toxins (HSTs) ACT-toxins responsible for brown spot of tangerine disease by the tangerine pathotype which affects tangerines and mandarins. ACT-toxins consist of three moieties, 9,10-epoxy-8-hydroxy-9-methyl-decatrienoic acid (EDA), valine and a polyketide. ACT-toxin I is toxic to both citrus and pear; toxin II the 5''-deoxy derivative of ACT-toxin I, is highly toxic to pear and slightly toxic to citrus. On cellular level, ACT-toxins affect plasma membrane of susceptible cells and cause a sudden increase in loss of K(+) after a few minutes of toxin treatment. The acyl-CoA ligase ACTT1, the hydrolase ACTT2, the enoyl-CoA hydratases ACTT3 and ACTT6, and the acyl-CoA synthetase ACTT5 are all involved in the biosynthesis of the AK-, AF- and ACT-toxin common 9,10-epoxy-8-hydroxy-9-methyl-decatrienoic acid (EDA) structural moiety. The exact role of each enzyme, and of additional enzymes identified within the AF-toxin clusters have still to be determined. On the other hand, ACTTS1 to ACTTS4 are specific to the tangerine pathotype. The function of ACTTS3 is to elongate the polyketide chain portion of ACT-toxin that is unique to this toxin. The enoyl-reductase ACTTS2 might complement the missing enoyl-reductase (ER) domain in ACTTS3 in the synthesis of the polyketide portion of ACT-toxin. The roles of the nonribosomal peptide synthetases-related proteins ACTTS1 and ACTTS4 have also still not been elucidated. This Alternaria alternata (Alternaria rot fungus) protein is Highly reducing polyketide synthase ACTTS3.